The sequence spans 421 residues: F-box protein At2g17690 (421 aa).

Residues 2–50 (GDWSKLPEELLGLIALRLYSVIELIRFRSICKSWRSSASGVNKNHSLSS) form the F-box domain.

In terms of biological role, involved in heat stress response. Contributes to recovery from heat stress. This chain is F-box protein At2g17690, found in Arabidopsis thaliana (Mouse-ear cress).